The sequence spans 181 residues: Protein Syd (181 aa).

It belongs to the Syd family.

The protein localises to the cell inner membrane. Interacts with the SecY protein in vivo. May bind preferentially to an uncomplexed state of SecY, thus functioning either as a chelating agent for excess SecY in the cell or as a regulatory factor that negatively controls the translocase function. In Escherichia coli O157:H7, this protein is Protein Syd.